We begin with the raw amino-acid sequence, 449 residues long: MSPESKKLFNIVILGVAFMFMFTAFQTCGNVAQTVIRSLNSTDFHGSGYTSLAIIYGVFSASNLITPSVVAIVGPQISMFVSGLFYSMYIAVFIQPFPWSFYTASVFIGIAAAVLWTAQGNCLTINSDEHTIGRNSGIFWALLQSSLFFGNLYIYFAWQGKTQISEHDRRTVFIALTVISLVGTVLFFLIRKPDPENVLGEEESCDDQDMEATESAQNNVTKAVDAFKKSLRLCVTREMLLLSVTTAYTGLELTFFSGVYGTCIGAVNKFGTEEKSLIGLSGIFIGIGEILGGSLFGLLSKNSRFGRNPVVLLGTLVHFVAFYLIFLNMPGDAPIAPVEGTNSIAYIRPSKEVAILCSFLLGLGDSCFNTQLLSILGFLYSEDSAPAFAVFKFVQSICAAVAFFYSNYLLLHWQLLVMVIFGFFGTISFFAVEWDAAAIVARGSDYRSI.

A helical membrane pass occupies residues Leu-8–Cys-28. Residue Asn-40 is glycosylated (N-linked (GlcNAc...) asparagine). 5 helical membrane passes run Ala-53–Val-73, Gly-74–Ile-94, Pro-96–Trp-116, Ile-138–Trp-158, and Arg-170–Ile-190. Ser-204 is subject to Phosphoserine. 6 consecutive transmembrane segments (helical) span residues Met-239–Val-259, Leu-277–Gly-297, Pro-309–Met-329, Phe-359–Leu-379, Ala-385–Tyr-405, and Leu-410–Phe-430.

This sequence belongs to the unc-93 family. Widely expressed.

Its subcellular location is the membrane. The polypeptide is UNC93-like protein MFSD11 (Mfsd11) (Mus musculus (Mouse)).